Reading from the N-terminus, the 576-residue chain is Proline--tRNA ligase (576 aa).

This sequence belongs to the class-II aminoacyl-tRNA synthetase family. ProS type 1 subfamily. Homodimer.

It localises to the cytoplasm. The catalysed reaction is tRNA(Pro) + L-proline + ATP = L-prolyl-tRNA(Pro) + AMP + diphosphate. Its function is as follows. Catalyzes the attachment of proline to tRNA(Pro) in a two-step reaction: proline is first activated by ATP to form Pro-AMP and then transferred to the acceptor end of tRNA(Pro). As ProRS can inadvertently accommodate and process non-cognate amino acids such as alanine and cysteine, to avoid such errors it has two additional distinct editing activities against alanine. One activity is designated as 'pretransfer' editing and involves the tRNA(Pro)-independent hydrolysis of activated Ala-AMP. The other activity is designated 'posttransfer' editing and involves deacylation of mischarged Ala-tRNA(Pro). The misacylated Cys-tRNA(Pro) is not edited by ProRS. The protein is Proline--tRNA ligase of Bordetella bronchiseptica (strain ATCC BAA-588 / NCTC 13252 / RB50) (Alcaligenes bronchisepticus).